Here is an 897-residue protein sequence, read N- to C-terminus: Protein SAP1 (897 aa).

5 disordered regions span residues Glu112 to Gln144, Pro195 to Lys219, Gln302 to Thr398, Ser413 to Val438, and Lys456 to Pro561. Residues Met120–Thr137 show a composition bias toward polar residues. Over residues Asn209 to Lys219 the composition is skewed to basic and acidic residues. A compositionally biased stretch (low complexity) spans Ser307 to Ser321. The segment covering Leu364–Ile380 has biased composition (polar residues). Over residues Lys468–Thr478 the composition is skewed to basic residues. Residues Lys480 to Pro496 are compositionally biased toward low complexity. Residues Val497–Lys523 are compositionally biased toward polar residues. Ser536 carries the phosphoserine modification. Gly645–Thr652 contacts ATP.

The protein belongs to the AAA ATPase family. As to quaternary structure, interacts with SPT2/SIN1.

The polypeptide is Protein SAP1 (SAP1) (Saccharomyces cerevisiae (strain ATCC 204508 / S288c) (Baker's yeast)).